Consider the following 228-residue polypeptide: MMIKQAELKRLERRVDYTFSDFSLLQQALTHRSALGNHNERLEFLGDSILSYAISTDLYARFPKVDEGDLSRMRATLVCGKMLAEIGREFQLGDCLILGPGELKSGGFRRDSIIADGVEAIIGAAFLDSDIDTVKKLILKWFDSRLNTIEPGISQKDPKTRLQEHLQSRKQPLPIYEVLEIKGEAHNQRFTMSCSIDGLKSVQGQGTSRRKAEQIAANKMLDSLSGAK.

The 123-residue stretch at 8–130 (LKRLERRVDY…IIGAAFLDSD (123 aa)) folds into the RNase III domain. Glutamate 43 provides a ligand contact to Mg(2+). The active site involves aspartate 47. 2 residues coordinate Mg(2+): aspartate 116 and glutamate 119. Glutamate 119 is an active-site residue. The region spanning 157-226 (DPKTRLQEHL…ANKMLDSLSG (70 aa)) is the DRBM domain.

This sequence belongs to the ribonuclease III family. As to quaternary structure, homodimer. Mg(2+) is required as a cofactor.

Its subcellular location is the cytoplasm. The enzyme catalyses Endonucleolytic cleavage to 5'-phosphomonoester.. Its function is as follows. Digests double-stranded RNA. Involved in the processing of primary rRNA transcript to yield the immediate precursors to the large and small rRNAs (23S and 16S). Processes some mRNAs, and tRNAs when they are encoded in the rRNA operon. Processes pre-crRNA and tracrRNA of type II CRISPR loci if present in the organism. The polypeptide is Ribonuclease 3 (Psychromonas ingrahamii (strain DSM 17664 / CCUG 51855 / 37)).